We begin with the raw amino-acid sequence, 277 residues long: MAVRGFKPTSPARRQMTVSTFEEITTDVPEKSLLVSLNNKAGRNNNGKITVRHRGGGNRNKYRLIDFKRNKDGVPAKVTTIEYDPNRSAYIALVVYADGEKRYIIAPTKLSVGDTVVSGPDADIKIGNALPIKNIPVGTVIHNVELAAGKGAQLVRAAGSSAQLMAKEGNYAQLRLPSGEMRYVRIECRATIGTVSNLTHDIVNIGKAGRKRHMGIRPTVRGSVMNPNDHPHGGGEGKSPVGRPGPVTPWGKPALGYKTRKNKKYSDKLIVKRRNDK.

The tract at residues Gly-215–Lys-277 is disordered. Over residues Lys-264–Lys-277 the composition is skewed to basic and acidic residues.

The protein belongs to the universal ribosomal protein uL2 family. In terms of assembly, part of the 50S ribosomal subunit. Forms a bridge to the 30S subunit in the 70S ribosome.

Functionally, one of the primary rRNA binding proteins. Required for association of the 30S and 50S subunits to form the 70S ribosome, for tRNA binding and peptide bond formation. It has been suggested to have peptidyltransferase activity; this is somewhat controversial. Makes several contacts with the 16S rRNA in the 70S ribosome. The polypeptide is Large ribosomal subunit protein uL2 (Clostridium acetobutylicum (strain ATCC 824 / DSM 792 / JCM 1419 / IAM 19013 / LMG 5710 / NBRC 13948 / NRRL B-527 / VKM B-1787 / 2291 / W)).